The sequence spans 505 residues: MYKFIKYISIYIKKLFFLNISFFKKVISIFQVDNILFLKKSSQELLKLSRVTLPKKFFVLINSEVLNRGKLCVRKGDLVLRGQTLTLGCGNIVSIHSPTSGRIIDVINNYIFFLDQFFAVVIVESDGRDLWISRTPICNYTQFSSKKLINLIYHSGILGLSGSGFSTSKKLQCAVGKVHTLVVNAVESEPCVTSDDCLIQNFSKEIIDGCKILIWILKIKKILIVVSEEKIIAFNVLKKSVINLKDFELLKVKNKYPSGSSKKLIQILFNKEIPQGKHAIDLGIIMYNVATVFAIKKAILDGEPLTERVITLYGDKFLPSKNVLVRIGTPISHLMKIYKLNEKTLKVNIGGPITGLLIRNFNFSVLKTNNCIMFVSIQNNELNNFEEKNCIRCAACSYSCPMNLLPEQLYWYSKHSNHEKTQIYNIQDCIECGICEQVCPSDIPLMSYYRREKKQISIAKFKNYQIKKFKNLFLLRKQRLNNLNSRKKNTIVSQYIALNKFNFKV.

4Fe-4S ferredoxin-type domains are found at residues E381–Y410 and K420–Y449. The [4Fe-4S] cluster site is built by C390, C393, C396, C400, C429, C432, C435, and C439.

It belongs to the 4Fe4S bacterial-type ferredoxin family. RnfC subfamily. The complex is composed of six subunits: RnfA, RnfB, RnfC, RnfD, RnfE and RnfG. The cofactor is [4Fe-4S] cluster.

It localises to the cell inner membrane. Part of a membrane-bound complex that couples electron transfer with translocation of ions across the membrane. This is Ion-translocating oxidoreductase complex subunit C from Buchnera aphidicola subsp. Baizongia pistaciae (strain Bp).